A 220-amino-acid polypeptide reads, in one-letter code: Fructose-6-phosphate aldolase (220 aa).

K85 functions as the Schiff-base intermediate with substrate in the catalytic mechanism.

The protein belongs to the transaldolase family. Type 3A subfamily. Homodecamer.

It localises to the cytoplasm. The catalysed reaction is beta-D-fructose 6-phosphate = dihydroxyacetone + D-glyceraldehyde 3-phosphate. Its function is as follows. Catalyzes the reversible formation of fructose 6-phosphate from dihydroxyacetone and D-glyceraldehyde 3-phosphate via an aldolization reaction. The protein is Fructose-6-phosphate aldolase of Klebsiella pneumoniae subsp. pneumoniae (strain ATCC 700721 / MGH 78578).